A 436-amino-acid polypeptide reads, in one-letter code: Probable cinnamyl alcohol dehydrogenase 8B (436 aa).

Cys120 contributes to the Zn(2+) binding site. Position 122 (Thr122) interacts with NADP(+). Residues His142, Glu143, Cys173, Cys176, Cys179, Cys187, and Cys236 each contribute to the Zn(2+) site. NADP(+) is bound by residues Thr240, 261–266 (GLGGLG), 284–289 (STSPGK), Thr324, Gly348, and 371–373 (NCV).

This sequence belongs to the zinc-containing alcohol dehydrogenase family. As to quaternary structure, homodimer. Zn(2+) serves as cofactor.

The enzyme catalyses (E)-cinnamyl alcohol + NADP(+) = (E)-cinnamaldehyde + NADPH + H(+). It carries out the reaction (E)-coniferol + NADP(+) = (E)-coniferaldehyde + NADPH + H(+). The catalysed reaction is (E)-sinapyl alcohol + NADP(+) = (E)-sinapaldehyde + NADPH + H(+). It catalyses the reaction (E)-4-coumaroyl alcohol + NADP(+) = (E)-4-coumaraldehyde + NADPH + H(+). The enzyme catalyses (E)-caffeyl alcohol + NADP(+) = (E)-caffeyl aldehyde + NADPH + H(+). Its pathway is aromatic compound metabolism; phenylpropanoid biosynthesis. Involved in lignin biosynthesis. Catalyzes the final step specific for the production of lignin monomers. Catalyzes the NADPH-dependent reduction of coniferaldehyde, 5-hydroxyconiferaldehyde, sinapaldehyde, 4-coumaraldehyde and caffeyl aldehyde to their respective alcohols. This chain is Probable cinnamyl alcohol dehydrogenase 8B, found in Oryza sativa subsp. japonica (Rice).